The chain runs to 381 residues: Succinyl-diaminopimelate desuccinylase (381 aa).

H71 serves as a coordination point for Zn(2+). D73 is a catalytic residue. D104 serves as a coordination point for Zn(2+). The active-site Proton acceptor is E138. Zn(2+) is bound by residues E139, E167, and H353.

It belongs to the peptidase M20A family. DapE subfamily. As to quaternary structure, homodimer. Requires Zn(2+) as cofactor. It depends on Co(2+) as a cofactor.

It carries out the reaction N-succinyl-(2S,6S)-2,6-diaminopimelate + H2O = (2S,6S)-2,6-diaminopimelate + succinate. It participates in amino-acid biosynthesis; L-lysine biosynthesis via DAP pathway; LL-2,6-diaminopimelate from (S)-tetrahydrodipicolinate (succinylase route): step 3/3. Catalyzes the hydrolysis of N-succinyl-L,L-diaminopimelic acid (SDAP), forming succinate and LL-2,6-diaminopimelate (DAP), an intermediate involved in the bacterial biosynthesis of lysine and meso-diaminopimelic acid, an essential component of bacterial cell walls. The protein is Succinyl-diaminopimelate desuccinylase of Shewanella pealeana (strain ATCC 700345 / ANG-SQ1).